A 539-amino-acid polypeptide reads, in one-letter code: Probable methionine--tRNA ligase, mitochondrial (539 aa).

The short motif at 28–38 (FYVNAAPHLGH) is the 'HIGH' region element. A 'KMSKS' region motif is present at residues 326–330 (KMSKS). An ATP-binding site is contributed by Lys-329.

Belongs to the class-I aminoacyl-tRNA synthetase family.

It localises to the mitochondrion matrix. It carries out the reaction tRNA(Met) + L-methionine + ATP = L-methionyl-tRNA(Met) + AMP + diphosphate. The chain is Probable methionine--tRNA ligase, mitochondrial from Schizosaccharomyces pombe (strain 972 / ATCC 24843) (Fission yeast).